The following is a 70-amino-acid chain: Deleted in esophageal cancer 1 (70 aa).

In terms of tissue distribution, expressed in many tissues, with highest expression in prostate and testis. Reduced expression in esophageal carcinomas.

Functionally, candidate tumor suppressor. In Homo sapiens (Human), this protein is Deleted in esophageal cancer 1.